Reading from the N-terminus, the 332-residue chain is GTP 3',8-cyclase (332 aa).

A Radical SAM core domain is found at 9–234; the sequence is TFGRRISYLR…DSDHRTGGPS (226 aa). Residue Arg18 participates in GTP binding. [4Fe-4S] cluster-binding residues include Cys25 and Cys29. An S-adenosyl-L-methionine-binding site is contributed by Tyr31. Cys32 contributes to the [4Fe-4S] cluster binding site. Residue Arg67 coordinates GTP. Gly71 is an S-adenosyl-L-methionine binding site. Thr100 serves as a coordination point for GTP. Residue Ser124 participates in S-adenosyl-L-methionine binding. A GTP-binding site is contributed by Lys160. Met194 contributes to the S-adenosyl-L-methionine binding site. The [4Fe-4S] cluster site is built by Cys257 and Cys260. GTP is bound at residue 262–264; it reads RVR. Position 274 (Cys274) interacts with [4Fe-4S] cluster.

It belongs to the radical SAM superfamily. MoaA family. In terms of assembly, monomer and homodimer. [4Fe-4S] cluster is required as a cofactor.

The catalysed reaction is GTP + AH2 + S-adenosyl-L-methionine = (8S)-3',8-cyclo-7,8-dihydroguanosine 5'-triphosphate + 5'-deoxyadenosine + L-methionine + A + H(+). The protein operates within cofactor biosynthesis; molybdopterin biosynthesis. Catalyzes the cyclization of GTP to (8S)-3',8-cyclo-7,8-dihydroguanosine 5'-triphosphate. The sequence is that of GTP 3',8-cyclase from Erythrobacter litoralis (strain HTCC2594).